The chain runs to 37 residues: Large ribosomal subunit protein bL36 (37 aa).

It belongs to the bacterial ribosomal protein bL36 family.

This is Large ribosomal subunit protein bL36 from Cyanothece sp. (strain PCC 7425 / ATCC 29141).